A 259-amino-acid polypeptide reads, in one-letter code: BTB/POZ domain-containing protein KCTD4 (259 aa).

A disordered region spans residues 1 to 25 (MERKINRREKEKEYEGKHNSLEDTD). The region spanning 33–134 (TLMTLNVGGY…EVKSRWEKEQ (102 aa)) is the BTB domain.

This is BTB/POZ domain-containing protein KCTD4 (KCTD4) from Homo sapiens (Human).